A 458-amino-acid polypeptide reads, in one-letter code: tRNA modification GTPase MnmE (458 aa).

Residues arginine 26, glutamate 88, and arginine 127 each contribute to the (6S)-5-formyl-5,6,7,8-tetrahydrofolate site. The TrmE-type G domain occupies 224–378 (GLSTAIIGRP…IEDRINQLFF (155 aa)). Asparagine 234 lines the K(+) pocket. GTP is bound by residues 234–239 (NVGKSS), 253–259 (TDIAGTT), and 278–281 (DTAG). Serine 238 provides a ligand contact to Mg(2+). Threonine 253, isoleucine 255, and threonine 258 together coordinate K(+). Residue threonine 259 participates in Mg(2+) binding. Lysine 458 contributes to the (6S)-5-formyl-5,6,7,8-tetrahydrofolate binding site.

The protein belongs to the TRAFAC class TrmE-Era-EngA-EngB-Septin-like GTPase superfamily. TrmE GTPase family. As to quaternary structure, homodimer. Heterotetramer of two MnmE and two MnmG subunits. Requires K(+) as cofactor.

It is found in the cytoplasm. Functionally, exhibits a very high intrinsic GTPase hydrolysis rate. Involved in the addition of a carboxymethylaminomethyl (cmnm) group at the wobble position (U34) of certain tRNAs, forming tRNA-cmnm(5)s(2)U34. The protein is tRNA modification GTPase MnmE of Streptococcus pyogenes serotype M12 (strain MGAS9429).